Consider the following 150-residue polypeptide: Large ribosomal subunit protein bL9 (150 aa).

It belongs to the bacterial ribosomal protein bL9 family.

Binds to the 23S rRNA. The protein is Large ribosomal subunit protein bL9 of Variovorax paradoxus (strain S110).